Here is a 158-residue protein sequence, read N- to C-terminus: 6,7-dimethyl-8-ribityllumazine synthase (158 aa).

Residues Trp28, 59 to 61 (TVE), and 81 to 83 (VVV) each bind 5-amino-6-(D-ribitylamino)uracil. 86–87 (DT) lines the (2S)-2-hydroxy-3-oxobutyl phosphate pocket. His89 functions as the Proton donor in the catalytic mechanism. Phe114 contacts 5-amino-6-(D-ribitylamino)uracil. A (2S)-2-hydroxy-3-oxobutyl phosphate-binding site is contributed by Arg128.

It belongs to the DMRL synthase family.

It carries out the reaction (2S)-2-hydroxy-3-oxobutyl phosphate + 5-amino-6-(D-ribitylamino)uracil = 6,7-dimethyl-8-(1-D-ribityl)lumazine + phosphate + 2 H2O + H(+). Its pathway is cofactor biosynthesis; riboflavin biosynthesis; riboflavin from 2-hydroxy-3-oxobutyl phosphate and 5-amino-6-(D-ribitylamino)uracil: step 1/2. Catalyzes the formation of 6,7-dimethyl-8-ribityllumazine by condensation of 5-amino-6-(D-ribitylamino)uracil with 3,4-dihydroxy-2-butanone 4-phosphate. This is the penultimate step in the biosynthesis of riboflavin. This chain is 6,7-dimethyl-8-ribityllumazine synthase, found in Micrococcus luteus (strain ATCC 4698 / DSM 20030 / JCM 1464 / CCM 169 / CCUG 5858 / IAM 1056 / NBRC 3333 / NCIMB 9278 / NCTC 2665 / VKM Ac-2230) (Micrococcus lysodeikticus).